Here is an 841-residue protein sequence, read N- to C-terminus: Protein translocase subunit SecA (841 aa).

ATP is bound by residues Gln-86, 104 to 108 (GEGKT), and Asp-493. A disordered region spans residues 788–822 (EEVAEGKAVRPSANGQEDKKAKRKPVRKAENIGRN). Residues Cys-825, Cys-827, Cys-836, and Cys-837 each coordinate Zn(2+).

This sequence belongs to the SecA family. As to quaternary structure, monomer and homodimer. Part of the essential Sec protein translocation apparatus which comprises SecA, SecYEG and auxiliary proteins SecDF. Other proteins may also be involved. The cofactor is Zn(2+).

The protein localises to the cell membrane. The protein resides in the cytoplasm. The enzyme catalyses ATP + H2O + cellular proteinSide 1 = ADP + phosphate + cellular proteinSide 2.. Part of the Sec protein translocase complex. Interacts with the SecYEG preprotein conducting channel. Has a central role in coupling the hydrolysis of ATP to the transfer of proteins into and across the cell membrane, serving as an ATP-driven molecular motor driving the stepwise translocation of polypeptide chains across the membrane. The sequence is that of Protein translocase subunit SecA from Shouchella clausii (strain KSM-K16) (Alkalihalobacillus clausii).